The following is a 70-amino-acid chain: Conotoxin ArMKLT2-0111 (70 aa).

The N-terminal stretch at 1-22 (MKLTCVLIIAVLFLTACQLTTG) is a signal peptide. Positions 23–40 (EQKDHALRSTDKNSKLTR) are excised as a propeptide. Residue glutamine 41 is modified to Pyrrolidone carboxylic acid. Disulfide bonds link cysteine 42/cysteine 56, cysteine 49/cysteine 60, and cysteine 55/cysteine 67.

It belongs to the conotoxin O1 superfamily. In terms of tissue distribution, expressed by the venom duct.

The protein localises to the secreted. In Conus arenatus (Sand-dusted cone), this protein is Conotoxin ArMKLT2-0111.